Reading from the N-terminus, the 25-residue chain is Tubulin alpha chain (25 aa).

Gln-11 contributes to the GTP binding site.

This sequence belongs to the tubulin family. In terms of assembly, dimer of alpha and beta chains. A typical microtubule is a hollow water-filled tube with an outer diameter of 25 nm and an inner diameter of 15 nM. Alpha-beta heterodimers associate head-to-tail to form protofilaments running lengthwise along the microtubule wall with the beta-tubulin subunit facing the microtubule plus end conferring a structural polarity. Microtubules usually have 13 protofilaments but different protofilament numbers can be found in some organisms and specialized cells. Requires Mg(2+) as cofactor.

Its subcellular location is the cytoplasm. It is found in the cytoskeleton. It carries out the reaction GTP + H2O = GDP + phosphate + H(+). Functionally, tubulin is the major constituent of microtubules, a cylinder consisting of laterally associated linear protofilaments composed of alpha- and beta-tubulin heterodimers. Microtubules grow by the addition of GTP-tubulin dimers to the microtubule end, where a stabilizing cap forms. Below the cap, tubulin dimers are in GDP-bound state, owing to GTPase activity of alpha-tubulin. This chain is Tubulin alpha chain, found in Leptomonas seymouri.